Reading from the N-terminus, the 89-residue chain is Large ribosomal subunit protein bL27 (89 aa).

The disordered stretch occupies residues Met1–Gly22. A compositionally biased stretch (polar residues) spans Ala7–Gln19.

The protein belongs to the bacterial ribosomal protein bL27 family.

This Cutibacterium acnes (strain DSM 16379 / KPA171202) (Propionibacterium acnes) protein is Large ribosomal subunit protein bL27.